Reading from the N-terminus, the 3470-residue chain is MFRIGRRQLWKQSVTRVLTQRLKEEKEAKRARLDGRHDYLFAIVASCLDLNKPEVEDALLEGNQIERIDQLFAVGGLRHLMFYYQDVEGAEAGQFGSSGGVNPASGKMKKPKVFVTEGKDVALMGACVFFTRADPSKAITAENIHREVSFNTLDTADGGLLNSVRRLLSDIFIPALRASSHGWGELEGLQDASSIQQEFLSSLEGFVGILSGAQNSLKEKVNLQKCDIVELKSLKEPMDYLALASNPETVEKVECCMRVWIKQMEQILAENNQLRKEADDVGPRAELEHWKKRLSKFNYLLDQLKSPDVKAVLAMLAAAKSKLLKVWRDADIRVTDAANEAKDNVKYLYTLEKCCDPLYSSDPVTMVDAIPTLINAIKMIYSISHYYNTSERITSLFVKVTNQMISACKAHITNNGTATIWSQPQDIVMQKIAAAIKLKQGYQCCFQETKQKLKQNPSEKQFDFSEMYIFGKFETFHQRLAKIMDIFTTFKTYSVLQDSKIEGLEDMVTKYQDVVAGIKKKEYNFLDQRKMDFDQDYDEFCKQTNELHSELQRFMDTTFEKIQSTRQALSTLKKFERLNIPNLGIEAKYQIVFQNFGTDIDMISKLYTKQKYDPPLARDQPPIAGKILWARQLFHRLEQPMQLFQQHPFVLRTVEAKPVIRSYNRIAKVLLEFEVLYHRAWLQQIEEIHVGLEASLLVKAPGTGQLFVNFDPQILILFRETQCMSQMGLPVSPFAAALFEKRDMYKKNFSDMKMMLSEYQRVKLKMPPAIEQLMLPHLARVDEALQPGLAVLTWTSLNIGTYLENAFEKIKDLELLLDRINDLIEFRIHAILEEMSSVALCQLPQDDPLTCEEFLQMTKDLCVNGAQKLHFKSSLVEEAVNELINMLLDVDVLPEEASEKVRHENASPNGDTSGGGEGCAEALASSFNAGTSSLPLTTIARKKKEMEVLEEARELLSYFNHQNTDALLKVTRNTLEAIRRRIHFSHMINFRDSKGASKVKQNHLPIFRASVTLAIPNISMTPALEDIQQTLNKAVECIISVPKGVRQWSSELLSKRKMRERKMAAVQSNEDSDSDTEVEESELQETLELASVNLPIPVQTQNYYKNISDNKEIVKLVSVLSTVISSTKKEVITSMDRFKCYNHIWQKEKEDTIMTFIAQNPLLSEFESRILYFQSLEQEINAEPEYICVGSIALYTADLKFSLTAETKAWMMVLGRHCNRKYRSEMENIFTVVEEFQKKLNRPIKDLDDIRIAMAALKEIREQQISTDFQVGPIEESYALLNKYGLLVAKEEMDKVDTLRYAWEKLLARASDVQNELGALQPSFRKELISTVEVFLQDCQQFYLDYDLNGPMVSGLKPQEASDRLIIFQNQFDNIYRKYITYTGGEELFGLPVTQYPQLLEIKKQLNLLQKIYSLYNNVIETVNSYQDTLWSEVNIEKINSELLEFQNRCRKLPRALKDWQAFLDMKKTIDDFSECCPLLEYMASNAMVERHWQRITTLTGHSLDVGNETFKLRNIMEVPLLKYKEEIEDICISAVKERDIEQKLKQVINEWDNKTLTFSSFKTRGELLLRGDSTSEVIASMEDSLMLLGSLLSNRYNMPFKAQIQNWVQCLSNSTDIIENWMTVQNLWIYLEAVFVGGDIAKQLPKEAKRFSNIDKSWVKIMTRAHEIPNVVQCCVGDETMGQLLPHLLDQLEICQKSLTGYLEKKRLCFPRFFFVSDPALLEILGQASDSHTIQAHLLNVFDNIKTVKFHDKIYDRILSISSREGETIELDKPVMAEGNVEVWLNSLLEESQSSLHLVIRQAAANIQESGFQLIEFLSSFPAQVGLLGIQMLWTRDSEEALQNAKFDKKIMQKTNQSFLELLNMLIEMTTKDLSSMERVKYETLITIHVHQRDIFDDLCHMHVKSPTDFEWLKQCRFYFKEDSDKTMIHITDVAFTYQNEFLGCTDRLVITPLTDRCYITLAQALGMSMGGAPAGPAGTGKTETTKDMGRCLGKYVVVFNCSDQMDFRGLGRIFKGLAQSGSWGCFDEFNRIDLPVLSVAAQQISIILTCKKEHKKSFIFTDGDNVTMNPEFGLFLTMNPGYAGRQELPENLKINFRSVAMMVPDRQIIIRVKLASCGFIDNVVLARKFFTLYQLCEEQLSKQVHYDFGLRNILSVLRTLGAAKRASHTDTESTIVMRVLRDMNLSKLIDEDEPLFLSLIEDLFPNILLDKAGYPELETAISKQVEEAGLINHPPWKLKVIQLFETQRVRHGMMTLGPSGSGKTSCIHTLMKAMTDCGKPHREMRMNPKAITAPQMFGRLDVATNDWTDGIFSTLWRKTLKAKKGEHIWIVLDGPVDAIWIENLNSVLDDNKTLTLANGDRIPMAPNCKIVFEPHNIDNASPATVSRNGMVFMSSSVLDWSPILEGFLKRRSPQEAEILRQLYAETFPDLYRFSIQNLEFKMEILEAFVITQSTHMLQGLIPTKEQAGDVDPEHLGRLFVFAMMWSVGAVLELEGRRRMELWLRSREGPTLHLPQLTDPGDTMFDYYVAPDGTWRHWSMCIPEYVYPPDTTPEYGSILVPNVDNVRTDFLIKTIAKQGKAVLLIGEQGTAKTVIIKGFMSKFDPESHTVKNLNFSSATTPLMFQRTIESYVDKRMGTTYGPPAGKKMAVFIDDLNMPVINEWGDQVTNEIVRQLMEQNGFYNLEKPGEFTSIVDIQFLAAMIHPGGGRNDIPQRLKRQFSIFNCTLPSDASMDKIFGVIGEGYYCAQRGFSKEVQDAVIKLVPLTRRLWQMTKLKMLPTPAKFHYVFNLRDLSRIWQGMLNITSEVIKDTDELLRLWKHECKRVIADRFSMSSDVTWFDKAVVSLVEEEFGEEKTPVVDCGVDAYFVDFLRDAPEATGETPEETDAEMPKLYEPIASLNHLQERLSVFLQLYNESIRGTGMDMVFFRDAMVHLVKISRVIRTPRGNALLVGVGGSGKQSLTRLASFIAGYTSFQITLTRSYNTSNLMEDLKVLYRTAGQQGKGITFIFTDNEIKEESFLEYMNNVLSSGEVSNLFARDEIDEINSDLTSIMKKEHPKRPPTNDNLYEYFMSRVRGNLHIVLCFSPVGEKFRNRALKFPALISGCTIDWFSRWPKDALVAVSEHFLSSYNIDCTAEIKKELVQCMGSFQDGVAEKCADYFQRFRRSTHVTPKSYLSFIQGYKFIYEEKHVEVQSLANRMNTGLEKLKEASESVAALSQELAVKEKELQVANEKADMVLKEVTMKAQAAEKVKAEVQKVKDKAQAIVDSISKDKAIAEEKLEAAKPALEEAEAALQTIKPSDIATVRTLGRPPHLIMRIMDCVLLLFHRRVNAVKIDLDKSCTVPSWQESLKLMTAGNFLQNLQQFPKDTINEEVIEFLSPYFEMSDYNIETAKRVCGNVAGLCSWTKAMASFFSINKEVLPLKANLIVQENRHALAMQDLQKAQAELDDKQAELDVVQAEYEQAMTEKQ.

The segment at 1–1938 (MFRIGRRQLW…MIHITDVAFT (1938 aa)) is stem. The tract at residues 899-918 (EKVRHENASPNGDTSGGGEG) is disordered. 4 AAA regions span residues 1939–2161 (YQNE…VLRT), 2221–2440 (TAIS…IQNL), 2547–2800 (VYPP…IWQG), and 2913–3167 (LYNE…FRRS). Residues 1977–1984 (GPAGTGKT) and 2259–2266 (GPSGSGKT) contribute to the ATP site. Coiled coils occupy residues 3207–3241 (LKEA…VLKE) and 3434–3468 (HALA…AMTE).

The protein belongs to the dynein heavy chain family. Interacts with DNAL1. Consists of at least two heavy chains and a number of intermediate and light chains.

Its subcellular location is the cytoplasm. The protein localises to the cytoskeleton. The protein resides in the cilium axoneme. Functionally, force generating protein of respiratory cilia. Produces force towards the minus ends of microtubules. Dynein has ATPase activity; the force-producing power stroke is thought to occur on release of ADP. Required for structural and functional integrity of the cilia of ependymal cells lining the brain ventricles. This chain is Dynein axonemal heavy chain 5, found in Rattus norvegicus (Rat).